Consider the following 353-residue polypeptide: 2-oxoglutarate-dependent dioxygenase phqC (353 aa).

The region spanning 199–315 (CASELRLNNY…RRSCAFFLKA (117 aa)) is the Fe2OG dioxygenase domain. Fe cation is bound by residues H227, D229, and H287. R302 provides a ligand contact to 2-oxoglutarate.

It belongs to the iron/ascorbate-dependent oxidoreductase family. Fe(2+) serves as cofactor.

The protein operates within alkaloid biosynthesis. Functionally, 2-oxoglutarate-dependent dioxygenase; part of the gene cluster that mediates the biosynthesis of paraherquamide, a fungal indole alkaloid that belongs to a family of natural products containing a characteristic bicyclo[2.2.2]diazaoctane core. The first steps in the biosynthesis of paraherquamide is the production of the beta-methyl-proline precursor from L-isoleucine. They require oxidation of a terminally hydroxylated L-isoleucine to the corresponding aldehyde by enzymes which have still to be identified. Spontaneous cyclization and dehydration would yield the 4-methyl pyrolline-5-carboxylic acid, which is then reduced by the pyrroline-5-carboxylate reductase phqD leading to the beta-methyl-proline precursor. The next step of paraherquamide biosynthesis involves coupling of beta-methyl-proline and L-tryptophan by the bimodular NRPS phqB, to produce a monooxopiperazine intermediate. The reductase (R) domain of phqB utilizes NADPH for hydride transfer to reduce the thioester bond of the T domain-tethered linear dipeptide to a hemithioaminal intermediate, which spontaneously cleaves the C-S bond to release the aldehyde product. This compound undergoes spontaneous cyclization and dehydration to give a dienamine which is reverse prenylated at C-2 by the reverse prenyltransferase phqJ. The other prenyltransferase present in the cluster, phqI may be a redundant gene in the pathway. During biosynthetic assembly, the key step to produce the polycyclic core is catalyzed by the bifunctional reductase and intramolecular [4+2] Diels-Alderase, phqE, resulting in formation of the [2.2.2] diazaoctane intermediate preparaherquamide. Following formation of preparaherquamide, an indole 2,3-epoxidation-initiated pinacol-like rearrangement is catalyzed by the phqK FAD-dependent monooxygenase. The prenyltransferase phqA, the cytochrome P450 monooxygenase phqL, and the FAD-linked oxidoreductase phqH (or the cytochrome P450 monooxygenase phqM), are proposed to be involved in the formation of the pyran ring. The FAD-dependent monooxygenase phqK is likely responsible for generation of the spiro-oxindole, and the N-methylation is likely mediated by the phqN methyltransferase leading to the isolable natural product paraherquamide F. However, the order of these biosynthetic steps has still to be determined. In late-stage paraherquamide biosynthesis, the third P450 monooxygenase, phqO, is probably responsible for the C-14 hydroxylation, transforming paraherquamide F to paraherquamide G, and paraherquamide E to the final product paraherquamide A. The expansion from the 6-membered ring pyran (in paraherquamides F and G) to the 7-membered dioxepin ring (in paraherquamides A and E) represents a poorly understood but intriguing process that probably involves the 2-oxoglutarate-dependent dioxygenase phqC. Finally, the remaining members of the paraherquamide cluster, including phqI as well as phqM (or phqH), do not have a clearly prescribed role and appear to be redundant. The protein is 2-oxoglutarate-dependent dioxygenase phqC of Penicillium fellutanum.